Here is a 548-residue protein sequence, read N- to C-terminus: T-complex protein 1 subunit theta (548 aa).

An N-acetylalanine modification is found at alanine 2. Residue serine 23 is modified to Phosphoserine. Tyrosine 30 carries the phosphotyrosine modification. Tyrosine 47 and glycine 48 together coordinate ADP. Aspartate 99 provides a ligand contact to Mg(2+). ADP is bound by residues glycine 100, threonine 101, asparagine 102, and phenylalanine 103. Residues glycine 100, threonine 101, and asparagine 102 each coordinate ATP. At serine 162 the chain carries Phosphoserine. Residues methionine 169, serine 170, and lysine 171 each contribute to the ADP site. Residues serine 170 and lysine 171 each contribute to the ATP site. Glycyl lysine isopeptide (Lys-Gly) (interchain with G-Cter in SUMO2) cross-links involve residues lysine 224, lysine 254, and lysine 260. 2 positions are modified to phosphoserine: serine 269 and serine 317. N6-acetyllysine occurs at positions 318 and 400. Residue glycine 412 coordinates ADP. Glycine 412 provides a ligand contact to ATP. Lysine 459 is covalently cross-linked (Glycyl lysine isopeptide (Lys-Gly) (interchain with G-Cter in SUMO1)). At lysine 466 the chain carries N6-acetyllysine. Residue aspartate 499 participates in ADP binding. ATP contacts are provided by aspartate 499 and lysine 504. Tyrosine 505 carries the phosphotyrosine modification. Positions proline 529–aspartate 548 are disordered. Lysine 534 is covalently cross-linked (Glycyl lysine isopeptide (Lys-Gly) (interchain with G-Cter in SUMO2)). Phosphoserine is present on serine 537. Lysine 539 is covalently cross-linked (Glycyl lysine isopeptide (Lys-Gly) (interchain with G-Cter in SUMO2)).

This sequence belongs to the TCP-1 chaperonin family. In terms of assembly, component of the chaperonin-containing T-complex (TRiC), a hexadecamer composed of two identical back-to-back stacked rings enclosing a protein folding chamber. Each ring is made up of eight different subunits: TCP1/CCT1, CCT2, CCT3, CCT4, CCT5, CCT6A/CCT6, CCT7, CCT8. Interacts with PACRG. Interacts with DNAAF4. Interacts with synaptic plasticity regulator PANTS.

The protein localises to the cytoplasm. It is found in the cytoskeleton. Its subcellular location is the microtubule organizing center. The protein resides in the centrosome. It localises to the cilium basal body. The catalysed reaction is ATP + H2O = ADP + phosphate + H(+). Functionally, component of the chaperonin-containing T-complex (TRiC), a molecular chaperone complex that assists the folding of actin, tubulin and other proteins upon ATP hydrolysis. The TRiC complex mediates the folding of WRAP53/TCAB1, thereby regulating telomere maintenance. As part of the TRiC complex may play a role in the assembly of BBSome, a complex involved in ciliogenesis regulating transports vesicles to the cilia. This is T-complex protein 1 subunit theta (Cct8) from Mus musculus (Mouse).